Reading from the N-terminus, the 344-residue chain is N-acetyl-gamma-glutamyl-phosphate reductase (344 aa).

Cys148 is an active-site residue.

The protein belongs to the NAGSA dehydrogenase family. Type 1 subfamily.

The protein resides in the cytoplasm. The catalysed reaction is N-acetyl-L-glutamate 5-semialdehyde + phosphate + NADP(+) = N-acetyl-L-glutamyl 5-phosphate + NADPH + H(+). It participates in amino-acid biosynthesis; L-arginine biosynthesis; N(2)-acetyl-L-ornithine from L-glutamate: step 3/4. Catalyzes the NADPH-dependent reduction of N-acetyl-5-glutamyl phosphate to yield N-acetyl-L-glutamate 5-semialdehyde. The polypeptide is N-acetyl-gamma-glutamyl-phosphate reductase (Clostridium beijerinckii (strain ATCC 51743 / NCIMB 8052) (Clostridium acetobutylicum)).